We begin with the raw amino-acid sequence, 350 residues long: MTTTTVTSTPLAEKTVLAPKAELHIHIEGSLEPELIFALAERNGVKLAYDSIDALRAAYAFTDLQSFLDIYYAGASVLLHEQDFYDMTMAYVERCLADNVVHSEIFFDPQTHTERGVPIATVVAGIERALADAEQRGMSSKLILCFLRHLSEEDALATFEEARPLFEQYRHRLIGVGLDSSERGHPPSKFERVFAKARSLGLKLVAHAGEEGPPSYIYEALDLLKVDRVDHGVRSIEDPALVTRLADSRVALTVCPLSNLKLCVFDDLTKHTLKDLLDRGVAVTVNSDDPAYFGGYVNANYLATIDALKLNDAEVYTIIRNSFEASFVTPGQRSELIAKLDAHWHPGGPH.

Positions 24, 26, and 207 each coordinate Zn(2+). Glutamate 210 acts as the Proton donor in catalysis. Aspartate 288 contacts Zn(2+). Residue aspartate 289 coordinates substrate.

It belongs to the metallo-dependent hydrolases superfamily. Adenosine and AMP deaminases family. Adenine deaminase type 2 subfamily. Requires Zn(2+) as cofactor.

It catalyses the reaction adenine + H2O + H(+) = hypoxanthine + NH4(+). Its function is as follows. Catalyzes the hydrolytic deamination of adenine to hypoxanthine. Plays an important role in the purine salvage pathway and in nitrogen catabolism. The polypeptide is Adenine deaminase (Paraburkholderia xenovorans (strain LB400)).